The primary structure comprises 489 residues: Rhamnulokinase (489 aa).

An ATP-binding site is contributed by 13-17 (ASSGR). A disulfide bridge links cysteine 68 with cysteine 222. Residues glycine 83 and 236–238 (HDT) each bind substrate. Residue aspartate 237 is the Proton acceptor of the active site. Threonine 259 is an ATP binding site. Residue asparagine 296 participates in substrate binding. Residue glutamine 304 coordinates ATP. Cysteine 353 and cysteine 370 are oxidised to a cystine. Position 402 (glycine 402) interacts with ATP. Cysteine 413 and cysteine 417 are oxidised to a cystine.

This sequence belongs to the rhamnulokinase family. It depends on Mg(2+) as a cofactor.

It catalyses the reaction L-rhamnulose + ATP = L-rhamnulose 1-phosphate + ADP + H(+). The protein operates within carbohydrate degradation; L-rhamnose degradation; glycerone phosphate from L-rhamnose: step 2/3. Involved in the catabolism of L-rhamnose (6-deoxy-L-mannose). Catalyzes the transfer of the gamma-phosphate group from ATP to the 1-hydroxyl group of L-rhamnulose to yield L-rhamnulose 1-phosphate. The protein is Rhamnulokinase of Salmonella enteritidis PT4 (strain P125109).